Consider the following 317-residue polypeptide: Probable methyltransferase tdiE (317 aa).

The protein belongs to the methyltransferase superfamily. LaeA methyltransferase family.

The protein operates within secondary metabolite biosynthesis. Probable methyltransferase; part of the gene cluster that mediates the biosynthesis of terrequinone A, an antitumor agent. The first step in the biosynthetic pathway for terrequinone A is formation of indole pyruvic acid (IPA) from L-tryptophan by the aminotransferase tdiD. The nonribosomal peptide synthase tdiA then immediately converts unstable IPA to didemethylasterriquinone D (DDAQ D), via condensation of 2 IPA molecules. The symmetric connectivity of the 2 IPA molecules is thought to arise by head-to-tail dual Claisen condensations facilitated by the TE domain. TdiB then catalyzes reverse prenylation by transferring dimethylallyl diphosphate to carbon atom 2' of DDAQ D, to yield asterriquinone C-1. Finally, tdiC and tdiE enzymes robustly convert asterriquinone C-1 to terrequinone A via a transformation involving regular prenylation at carbon atom 5, which requires elimination of the hydroxy group on C-5. The polypeptide is Probable methyltransferase tdiE (Emericella nidulans (strain FGSC A4 / ATCC 38163 / CBS 112.46 / NRRL 194 / M139) (Aspergillus nidulans)).